The sequence spans 165 residues: Group 10 secretory phospholipase A2 (165 aa).

Positions 1 to 31 (MGPLPVCLPIMLLLLLPSLLLLLLLPGPGSG) are cleaved as a signal peptide. Positions 32 to 42 (EASRILRVHRR) are excised as a propeptide. 8 disulfide bridges follow: C53/C111, C67/C157, C69/C85, C84/C139, C90/C164, C91/C132, C100/C125, and C118/C130. Ca(2+)-binding residues include F68, G70, and G72. H88 is an active-site residue. D89 contacts Ca(2+). N113 carries an N-linked (GlcNAc...) asparagine glycan. Residue D133 is part of the active site.

It belongs to the phospholipase A2 family. In terms of assembly, interacts with PLA2R1; this interaction mediates PLA2G10 clearance and inactivation. It depends on Ca(2+) as a cofactor. Found in spleen, thymus, peripheral blood leukocytes, pancreas, lung, and colon. Expressed in neuronal fibers in dorsal root ganglia and in peripheral tissues including stomach, white adipose tissue and prostate (at protein level).

Its subcellular location is the secreted. The protein resides in the lysosome. It is found in the cytoplasmic vesicle. It localises to the secretory vesicle. The protein localises to the acrosome. It carries out the reaction a 1,2-diacyl-sn-glycero-3-phosphocholine + H2O = a 1-acyl-sn-glycero-3-phosphocholine + a fatty acid + H(+). The enzyme catalyses 1-hexadecanoyl-2-(9Z-octadecenoyl)-sn-glycero-3-phosphocholine + H2O = 1-hexadecanoyl-sn-glycero-3-phosphocholine + (9Z)-octadecenoate + H(+). The catalysed reaction is 1-octadecanoyl-2-(5Z,8Z,11Z,14Z-eicosatetraenoyl)-sn-glycero-3-phosphocholine + H2O = 1-octadecanoyl-sn-glycero-3-phosphocholine + (5Z,8Z,11Z,14Z)-eicosatetraenoate + H(+). It catalyses the reaction 1,2-dihexadecanoyl-sn-glycero-3-phosphocholine + H2O = 1-hexadecanoyl-sn-glycero-3-phosphocholine + hexadecanoate + H(+). It carries out the reaction 1-hexadecanoyl-2-(9Z-octadecenoyl)-sn-glycero-3-phosphoglycerol + H2O = 1-hexadecanoyl-sn-glycero-3-phosphoglycerol + (9Z)-octadecenoate + H(+). The enzyme catalyses 1,2-dihexadecanoyl-sn-glycero-3-phospho-(1'-sn-glycerol) + H2O = 1-hexadecanoyl-sn-glycero-3-phospho-(1'-sn-glycerol) + hexadecanoate + H(+). The catalysed reaction is 1-hexadecanoyl-2-(9Z-octadecenoyl)-sn-glycero-3-phospho-L-serine + H2O = 1-hexadecanoyl-sn-glycero-3-phospho-L-serine + (9Z)-octadecenoate + H(+). It catalyses the reaction 1-hexadecanoyl-2-(9Z,12Z-octadecadienoyl)-sn-glycero-3-phosphoethanolamine + H2O = 1-hexadecanoyl-sn-glycero-3-phosphoethanolamine + (9Z,12Z)-octadecadienoate + H(+). It carries out the reaction 1-hexadecanoyl-2-(9Z-octadecenoyl)-sn-glycero-3-phosphate + H2O = 1-hexadecanoyl-sn-glycero-3-phosphate + (9Z)-octadecenoate + H(+). The enzyme catalyses 1-O-hexadecyl-2-acetyl-sn-glycero-3-phosphocholine + H2O = 1-O-hexadecyl-sn-glycero-3-phosphocholine + acetate + H(+). Inhibited by methyl indoxam. In terms of biological role, secretory calcium-dependent phospholipase A2 that primarily targets extracellular phospholipids. Hydrolyzes the ester bond of the fatty acyl group attached at sn-2 position of phospholipids with preference for phosphatidylcholines and phosphatidylglycerols over phosphatidylethanolamines. Preferentially releases sn-2 omega-6 and omega-3 polyunsaturated fatty acyl (PUFA) chains over saturated fatty acyls. Contributes to phospholipid remodeling of very low-density lipoprotein (VLDL), low-density lipoprotein (LDL) and high-density lipoprotein (HDL) particles. Hydrolyzes LDL phospholipids releasing unsaturated fatty acids that regulate macrophage differentiation toward foam cells. Efficiently hydrolyzes and inactivates platelet activating factor (PAF), a potent lipid mediator present in oxidized LDL. May act in an autocrine and paracrine manner. Secreted by lung epithelium, targets membrane phospholipids of infiltrating eosinophils, releasing arachidonate and boosting eicosanoid and cysteinyl leukotriene synthesis involved in airway inflammatory response. Secreted by gut epithelium, hydrolyzes dietary and biliary phosphatidylcholines in the gastrointestinal lumen. Plays a stem cell regulator role in colon epithelium. Within intracellular compartment, mediates Paneth-like cell differentiation and its stem cell supporting functions by inhibiting the Wnt signaling pathway in intestinal stem cell (ISC). Secreted in the intestinal lumen upon inflammation, acts in an autocrine way and promotes prostaglandin E2 synthesis that stimulates Wnt signaling pathway in ISCs and tissue regeneration. May participate in hair follicle morphogenesis by regulating phosphatidylethanolamines metabolism at the outermost epithelial layer and facilitating melanin synthesis. By releasing lysophosphatidylcholines (LPCs) at sperm acrosome, controls sperm cell capacitation, acrosome reaction and overall fertility. May promote neurite outgrowth in neuron fibers involved in nociception. Contributes to lipid remodeling of cellular membranes and generation of lipid mediators involved in pathogen clearance. Cleaves sn-2 fatty acyl chains of phosphatidylglycerols and phosphatidylethanolamines, which are major components of membrane phospholipids in bacteria. Displays bactericidal activity against Gram-positive bacteria by directly hydrolyzing phospholipids of the bacterial membrane. In pulmonary epithelium, may contribute to host defense response against adenoviral infection. Prevents adenovirus entry into host cells by hydrolyzing host cell plasma membrane, releasing C16:0 LPCs that inhibit virus-mediated membrane fusion and viral infection. Likely prevents adenoviral entry into the endosomes of host cells. May play a role in maturation and activation of innate immune cells including macrophages, group 2 innate lymphoid cells and mast cells. In Homo sapiens (Human), this protein is Group 10 secretory phospholipase A2 (PLA2G10).